Reading from the N-terminus, the 151-residue chain is Small ribosomal subunit protein uS15 (151 aa).

The tract at residues 1–20 (MARLHSGKRGSSGSTRPLRT) is disordered.

It belongs to the universal ribosomal protein uS15 family. Part of the 30S ribosomal subunit.

The sequence is that of Small ribosomal subunit protein uS15 from Methanococcus aeolicus (strain ATCC BAA-1280 / DSM 17508 / OCM 812 / Nankai-3).